Consider the following 577-residue polypeptide: Cleavage stimulation factor subunit 2 (577 aa).

Phosphoserine is present on serine 14. Positions 16–94 (RSVFVGNIPY…RALRVDNAAS (79 aa)) constitute an RRM domain. Residues 108–248 (APVIESPYGE…VNGAPPLMQA (141 aa)) form an interactions with CSTF3 and SYMPK region. Lysine 189 is covalently cross-linked (Glycyl lysine isopeptide (Lys-Gly) (interchain with G-Cter in SUMO2)). The tract at residues 207-230 (PVHGAGPGSGSNVSMNQQNPQAPQ) is disordered. An Omega-N-methylarginine modification is found at arginine 308. Positions 319-409 (RGLLGDAPND…DGRGGRDPRG (91 aa)) are disordered. Over residues 360-373 (PGHESRGPPPHELR) the composition is skewed to basic and acidic residues. Residues 410–414 (IDARG) form a 1; approximate repeat. The interval 410-469 (IDARGMEARAMEARGLDARGLEARAMEARAMEARAMEARAMEARAMEVRGMEARGMDTRG) is 12 X 5 AA tandem repeats of M-E-A-R-[AG]. Tandem repeats lie at residues 415-419 (MEARA) and 420-424 (MEARG). One copy of the 4; approximate repeat lies at 425–429 (LDARG). The stretch at 430–434 (LEARA) is one 5; approximate repeat. 4 repeat units span residues 435–439 (MEARA), 440–444 (MEARA), 445–449 (MEARA), and 450–454 (MEARA). Residues 455 to 459 (MEVRG) form a 10; approximate repeat. Residues 460–464 (MEARG) form repeat 11. The 12; approximate repeat unit spans residues 465–469 (MDTRG). Arginine 468 and arginine 475 each carry omega-N-methylarginine. Residues 509–532 (LQGASIQGGSQPGGFSPGQNQVTP) form a disordered region. The interaction with RPO2TC1 stretch occupies residues 514–577 (IQGGSQPGGF…EQIQKSTGAP (64 aa)). Phosphoserine is present on residues serine 518 and serine 524.

As to quaternary structure, the CSTF complex is composed of CSTF1 (50 kDa subunit), CSTF2 (64 kDa subunit) and CSTF3 (77 kDa subunit). CSTF2 directly interacts with CSTF3, SYMPK and RPO2TC1. Interacts with HSF1 in heat-stressed cells. Interacts with CPSF2, CPSF3 and FIP1L1. Interacts with DDX1.

It is found in the nucleus. Its function is as follows. One of the multiple factors required for polyadenylation and 3'-end cleavage of mammalian pre-mRNAs. This subunit is directly involved in the binding to pre-mRNAs. The sequence is that of Cleavage stimulation factor subunit 2 (CSTF2) from Pongo abelii (Sumatran orangutan).